A 315-amino-acid chain; its full sequence is GTP cyclohydrolase MptA (315 aa).

The protein belongs to the GTP cyclohydrolase IV family. In terms of assembly, homodimer. It depends on Fe(2+) as a cofactor.

The enzyme catalyses GTP + H2O = 7,8-dihydroneopterin 2',3'-cyclic phosphate + formate + diphosphate + H(+). It functions in the pathway cofactor biosynthesis; 5,6,7,8-tetrahydromethanopterin biosynthesis. Functionally, converts GTP to 7,8-dihydro-D-neopterin 2',3'-cyclic phosphate, the first intermediate in the biosynthesis of coenzyme methanopterin. The polypeptide is GTP cyclohydrolase MptA (Methanococcus maripaludis (strain C5 / ATCC BAA-1333)).